Here is a 380-residue protein sequence, read N- to C-terminus: Chaperone protein DnaJ (380 aa).

Residues 5-69 form the J domain; it reads DLYKVLGVEK…QKRAQYDQFG (65 aa). The CR-type zinc-finger motif lies at 140–222; sequence GKKTTITYNR…CGGSGHTEQS (83 aa). 8 residues coordinate Zn(2+): Cys-153, Cys-156, Cys-170, Cys-173, Cys-196, Cys-199, Cys-210, and Cys-213. CXXCXGXG motif repeat units follow at residues 153–160, 170–177, 196–203, and 210–217; these read CETCGGSG, CSKCHGAG, CDVCHGTG, and CATCGGSG.

Belongs to the DnaJ family. Homodimer. It depends on Zn(2+) as a cofactor.

The protein resides in the cytoplasm. Functionally, participates actively in the response to hyperosmotic and heat shock by preventing the aggregation of stress-denatured proteins and by disaggregating proteins, also in an autonomous, DnaK-independent fashion. Unfolded proteins bind initially to DnaJ; upon interaction with the DnaJ-bound protein, DnaK hydrolyzes its bound ATP, resulting in the formation of a stable complex. GrpE releases ADP from DnaK; ATP binding to DnaK triggers the release of the substrate protein, thus completing the reaction cycle. Several rounds of ATP-dependent interactions between DnaJ, DnaK and GrpE are required for fully efficient folding. Also involved, together with DnaK and GrpE, in the DNA replication of plasmids through activation of initiation proteins. The sequence is that of Chaperone protein DnaJ from Lactiplantibacillus plantarum (strain ATCC BAA-793 / NCIMB 8826 / WCFS1) (Lactobacillus plantarum).